The chain runs to 205 residues: MTTNSLLIIDFEFTMPDGKYSPQNFFPEIIEAGIVKSIDDEVVETFSSYVRPKKFPKLTKRCKSFLKITQKQVDEGMRFEDFIRKLNELDPEKNSTIITWGNMDMKVLKQNCMFNHIPFPFKGEMRDLSLEYKNFFGDRTLTGLWKAAEEYGDSGTGTHHKALDDALTAYKLFKLVEQDKQYLEKPKPPTIGERIDLTELLKRAT.

An Exonuclease domain is found at 6–173; it reads LLIIDFEFTM…DDALTAYKLF (168 aa). Asp-10, Glu-12, and Asp-104 together coordinate Mg(2+). The Proton acceptor role is filled by Glu-12. Glu-12 is an AMP binding site. The Proton acceptor role is filled by His-160. His-160 is a binding site for AMP. Asp-165 lines the Mg(2+) pocket.

Mg(2+) serves as cofactor.

Specifically inhibits the KinA pathway to sporulation. The sequence is that of Probable 3'-5' exonuclease KapD (kapD) from Bacillus subtilis (strain 168).